Here is a 265-residue protein sequence, read N- to C-terminus: tRNA pseudouridine synthase A (265 aa).

Aspartate 53 acts as the Nucleophile in catalysis. Substrate is bound at residue tyrosine 111.

The protein belongs to the tRNA pseudouridine synthase TruA family. As to quaternary structure, homodimer.

It catalyses the reaction uridine(38/39/40) in tRNA = pseudouridine(38/39/40) in tRNA. Functionally, formation of pseudouridine at positions 38, 39 and 40 in the anticodon stem and loop of transfer RNAs. The chain is tRNA pseudouridine synthase A from Acinetobacter baumannii (strain ATCC 17978 / DSM 105126 / CIP 53.77 / LMG 1025 / NCDC KC755 / 5377).